The primary structure comprises 416 residues: Iron-regulated transcriptional activator AFT2 (416 aa).

Aspartate 53 contributes to the Zn(2+) binding site. Residues arginine 54, histidine 55, lysine 58, isoleucine 74, glutamate 75, arginine 76, serine 77, aspartate 78, and lysine 81 each coordinate DNA. Histidine 55 serves as a coordination point for Zn(2+). Position 86 (cysteine 86) interacts with Zn(2+). Serine 88 provides a ligand contact to DNA. Cysteine 109 contacts Zn(2+). Positions 119 and 120 each coordinate DNA. Residues histidine 133 and histidine 135 each contribute to the Zn(2+) site. Residues glutamine 157 and asparagine 159 each contribute to the DNA site. The short motif at 187 to 189 (CDC) is the CDC [2Fe-2S] cluster binding motif element.

Homodimer. Dimerization decreases the DNA-binding activity.

It is found in the nucleus. Its activity is regulated as follows. Dimerization via the binding of Fe(2+) or a [2Fe-2S] cluster decreases the DNA-binding activity. In terms of biological role, transcription factor required for iron homeostasis and resistance to oxidative stress. With AFT1, activates the gene expression in response to low-iron conditions, also called iron regulon. Recognizes the consensus iron-responsive element (Fe-RE) sequence 5'-CACCC-3' in the promoters of target genes. The transcription activation by AFT1 and AFT2 depends on the mitochondrial iron-sulfur protein biosynthesis pathway. In high iron condition, the presence of iron leads to dimerization, which in turn leads to a decrease in DNA affinity. The chain is Iron-regulated transcriptional activator AFT2 from Saccharomyces cerevisiae (strain ATCC 204508 / S288c) (Baker's yeast).